Consider the following 172-residue polypeptide: Adenine phosphoribosyltransferase (172 aa).

It belongs to the purine/pyrimidine phosphoribosyltransferase family. Homodimer.

The protein resides in the cytoplasm. The enzyme catalyses AMP + diphosphate = 5-phospho-alpha-D-ribose 1-diphosphate + adenine. It participates in purine metabolism; AMP biosynthesis via salvage pathway; AMP from adenine: step 1/1. Its function is as follows. Catalyzes a salvage reaction resulting in the formation of AMP, that is energically less costly than de novo synthesis. This is Adenine phosphoribosyltransferase from Exiguobacterium sp. (strain ATCC BAA-1283 / AT1b).